The sequence spans 77 residues: Acyl carrier protein (77 aa).

The Carrier domain occupies 2-77 (SDVADRVKKI…DAVKFISEAS (76 aa)). Residue S37 is modified to O-(pantetheine 4'-phosphoryl)serine.

This sequence belongs to the acyl carrier protein (ACP) family. Post-translationally, 4'-phosphopantetheine is transferred from CoA to a specific serine of apo-ACP by AcpS. This modification is essential for activity because fatty acids are bound in thioester linkage to the sulfhydryl of the prosthetic group.

It localises to the cytoplasm. Its pathway is lipid metabolism; fatty acid biosynthesis. Functionally, carrier of the growing fatty acid chain in fatty acid biosynthesis. In Ruegeria pomeroyi (strain ATCC 700808 / DSM 15171 / DSS-3) (Silicibacter pomeroyi), this protein is Acyl carrier protein.